The primary structure comprises 371 residues: DNA replication and repair protein RecF (371 aa).

An ATP-binding site is contributed by Gly-30–Thr-37.

Belongs to the RecF family.

It localises to the cytoplasm. Its function is as follows. The RecF protein is involved in DNA metabolism; it is required for DNA replication and normal SOS inducibility. RecF binds preferentially to single-stranded, linear DNA. It also seems to bind ATP. The polypeptide is DNA replication and repair protein RecF (Lysinibacillus sphaericus (strain C3-41)).